We begin with the raw amino-acid sequence, 226 residues long: Large ribosomal subunit protein uL1 (226 aa).

Belongs to the universal ribosomal protein uL1 family. As to quaternary structure, part of the 50S ribosomal subunit.

Its function is as follows. Binds directly to 23S rRNA. The L1 stalk is quite mobile in the ribosome, and is involved in E site tRNA release. In terms of biological role, protein L1 is also a translational repressor protein, it controls the translation of the L11 operon by binding to its mRNA. The polypeptide is Large ribosomal subunit protein uL1 (Borrelia garinii subsp. bavariensis (strain ATCC BAA-2496 / DSM 23469 / PBi) (Borreliella bavariensis)).